Reading from the N-terminus, the 237-residue chain is Demethylmenaquinone methyltransferase (237 aa).

Residues Thr-58, Asp-79, and 106–107 contribute to the S-adenosyl-L-methionine site; that span reads NA.

This sequence belongs to the class I-like SAM-binding methyltransferase superfamily. MenG/UbiE family.

The catalysed reaction is a 2-demethylmenaquinol + S-adenosyl-L-methionine = a menaquinol + S-adenosyl-L-homocysteine + H(+). Its pathway is quinol/quinone metabolism; menaquinone biosynthesis; menaquinol from 1,4-dihydroxy-2-naphthoate: step 2/2. Functionally, methyltransferase required for the conversion of demethylmenaquinol (DMKH2) to menaquinol (MKH2). This is Demethylmenaquinone methyltransferase from Bacillus mycoides (strain KBAB4) (Bacillus weihenstephanensis).